The primary structure comprises 216 residues: DNA gyrase subunit B (216 aa).

Positions 140–216 (SELFLVEGDS…PDKLRYHKIV (77 aa)) constitute a Toprim domain.

It belongs to the type II topoisomerase GyrB family. Heterotetramer, composed of two GyrA and two GyrB chains. In the heterotetramer, GyrA contains the active site tyrosine that forms a transient covalent intermediate with DNA, while GyrB binds cofactors and catalyzes ATP hydrolysis.

It localises to the cytoplasm. The enzyme catalyses ATP-dependent breakage, passage and rejoining of double-stranded DNA.. A type II topoisomerase that negatively supercoils closed circular double-stranded (ds) DNA in an ATP-dependent manner to modulate DNA topology and maintain chromosomes in an underwound state. Negative supercoiling favors strand separation, and DNA replication, transcription, recombination and repair, all of which involve strand separation. Also able to catalyze the interconversion of other topological isomers of dsDNA rings, including catenanes and knotted rings. Type II topoisomerases break and join 2 DNA strands simultaneously in an ATP-dependent manner. In Acinetobacter sp. (strain SEIP 12.81), this protein is DNA gyrase subunit B (gyrB).